Reading from the N-terminus, the 1558-residue chain is Arginine-glutamic acid dipeptide repeats protein (1558 aa).

The span at 1-36 (MTADKDKDKDKEKDRDRDRDRERDKRDKARESENAR) shows a compositional bias: basic and acidic residues. Residues 1–90 (MTADKDKDKD…KKKSRYERTD (90 aa)) form a disordered region. Serine 53 and serine 56 each carry phosphoserine. A compositionally biased stretch (basic residues) spans 74 to 85 (KSRKKPPKKKSR). The BAH domain occupies 103 to 283 (VVYRPGDCVY…PETRRLNSTQ (181 aa)). Residue threonine 120 is modified to Phosphothreonine. Residues serine 142 and serine 304 each carry the phosphoserine modification. An ELM2 domain is found at 284–387 (GEIRVGPSHQ…KALQRLVKKP (104 aa)). The 53-residue stretch at 391–443 (LIEKCWTEDEVKRFVKGLRQYGKNFFRIRKELLPSKETGELITFYYYWKKTPE) folds into the SANT domain. The tract at residues 464–495 (TRTASTPVNTPSRPPSSEFLDLSSASEDDFDS) is disordered. Polar residues predominate over residues 465 to 474 (RTASTPVNTP). Positions 479–488 (SSEFLDLSSA) are enriched in low complexity. The GATA-type zinc-finger motif lies at 507 to 532 (CRHCFTTTSKDWHHGGRENILLCTDC). Residues 542 to 1125 (LPPIEKPVDP…PSHASQSARF (584 aa)) are disordered. Lysine 560 participates in a covalent cross-link: Glycyl lysine isopeptide (Lys-Gly) (interchain with G-Cter in SUMO2). Residue threonine 593 is modified to Phosphothreonine. Residues serine 594, serine 600, and serine 613 each carry the phosphoserine modification. A compositionally biased stretch (low complexity) spans 609-623 (SGRNSPSAASTSSND). Positions 624–640 (SKAETVKKSAKKVKEEA) are enriched in basic and acidic residues. A Glycyl lysine isopeptide (Lys-Gly) (interchain with G-Cter in SUMO2) cross-link involves residue lysine 637. Phosphoserine is present on residues serine 642, serine 656, serine 675, and serine 679. The segment covering 652 to 673 (EKVASDTEDTDRITSKKTKTQE) has biased composition (basic and acidic residues). Residues 688-708 (SDSRSVNDEGSSDPKDIDQDN) show a composition bias toward basic and acidic residues. The span at 709-720 (RSTSPSIPSPQD) shows a compositional bias: polar residues. Residues 726–752 (DSSAQQQMLQAQPPALQAPSGAASAPS) are compositionally biased toward low complexity. Residues 778 to 792 (SPATSQPPNQTQSTV) are compositionally biased toward polar residues. Over residues 806 to 823 (LHPPRLPSPHPPLQPMTA) the composition is skewed to pro residues. Low complexity-rich tracts occupy residues 824-857 (PPSQSSAQPHPQPSLHSQGPPGPHSLQTGPLLQH), 865-874 (GLPSQPSQGQ), and 891-901 (QLPASQSALQP). Over residues 902–932 (QQPPREQPLPPAPLAMPHIKPPPTTPIPQLP) the composition is skewed to pro residues. A compositionally biased stretch (low complexity) spans 962–972 (KPLSSLSTHHP). Polar residues predominate over residues 1012-1023 (HPTTGLHQVPSQ). The segment covering 1027-1053 (PQHPFVPGGPPPITPPSCPPTSTPPAG) has biased composition (pro residues). Residues 1054 to 1077 (PSSSSQPPCSAAVSSGGSVPGAPS) are compositionally biased toward low complexity. A phosphoserine mark is found at serine 1098, serine 1105, and serine 1107. Pro residues predominate over residues 1098-1109 (SPPPPPRSPSPE). Threonine 1111 bears the Phosphothreonine mark. The stretch at 1148–1203 (GSKLAKKREEAIEKAKREAEQKAREEREREKEKEKEREREREREREAERAAKASSS) forms a coiled coil. The residue at position 1150 (lysine 1150) is an N6-acetyllysine. Residues 1154 to 1198 (KREEAIEKAKREAEQKAREEREREKEKEKEREREREREREAERAA) show a composition bias toward basic and acidic residues. Positions 1154-1238 (KREEAIEKAK…TTIAAVPPYI (85 aa)) are disordered. Tyrosine 1251 is subject to Phosphotyrosine. Phosphoserine is present on serine 1258.

As to quaternary structure, interacts with HDAC1 and ATN1. Interaction with ATN1 is improved when the poly-Gln region of ATN1 is extended. Interacts with FAT1.

The protein resides in the nucleus. It localises to the PML body. Plays a role as a transcriptional repressor during development. May play a role in the control of cell survival. The polypeptide is Arginine-glutamic acid dipeptide repeats protein (Rere) (Mus musculus (Mouse)).